The chain runs to 481 residues: Putative amino-acid transporter CPE0389 (481 aa).

Transmembrane regions (helical) follow at residues 7 to 27 (LGVI…GVYN), 36 to 56 (ASAG…WFIA), 87 to 107 (FLMA…YAVL), 127 to 147 (LSIA…LAGV), 156 to 176 (IGTI…LFSF), 208 to 228 (STML…VVSG), 241 to 261 (FLGF…PLGV), 289 to 309 (VIMN…WTVM), 338 to 358 (FSLL…HFAG), 364 to 384 (MLSI…LYLF), 401 to 421 (RKYA…LIYA), 422 to 442 (AGIN…PVFI), and 461 to 481 (YFAI…FKFM).

It belongs to the amino acid-polyamine-organocation (APC) superfamily. Basic amino acid/polyamine antiporter (APA) (TC 2.A.3.2) family.

It localises to the cell membrane. Its function is as follows. Could be an amino acid transporter. The sequence is that of Putative amino-acid transporter CPE0389 from Clostridium perfringens (strain 13 / Type A).